Here is a 463-residue protein sequence, read N- to C-terminus: Glycine--tRNA ligase (463 aa).

Residue arginine 102 coordinates substrate. The tract at residues 113-134 (KHGHPPPNGLADIRDPDTGEPG) is disordered. Glutamate 165 contributes to the substrate binding site. Residues 197–199 (RNE), 207–212 (FRTREF), 284–285 (EL), and 328–331 (GLTR) contribute to the ATP site. A substrate-binding site is contributed by 212–216 (FEQME). 324 to 328 (EPAAG) provides a ligand contact to substrate.

The protein belongs to the class-II aminoacyl-tRNA synthetase family. In terms of assembly, homodimer.

It localises to the cytoplasm. It catalyses the reaction tRNA(Gly) + glycine + ATP = glycyl-tRNA(Gly) + AMP + diphosphate. In terms of biological role, catalyzes the attachment of glycine to tRNA(Gly). This chain is Glycine--tRNA ligase, found in Mycolicibacterium paratuberculosis (strain ATCC BAA-968 / K-10) (Mycobacterium paratuberculosis).